Consider the following 179-residue polypeptide: Large ribosomal subunit protein uL5 (179 aa).

It belongs to the universal ribosomal protein uL5 family. In terms of assembly, part of the 50S ribosomal subunit; part of the 5S rRNA/L5/L18/L25 subcomplex. Contacts the 5S rRNA and the P site tRNA. Forms a bridge to the 30S subunit in the 70S ribosome.

Functionally, this is one of the proteins that bind and probably mediate the attachment of the 5S RNA into the large ribosomal subunit, where it forms part of the central protuberance. In the 70S ribosome it contacts protein S13 of the 30S subunit (bridge B1b), connecting the 2 subunits; this bridge is implicated in subunit movement. Contacts the P site tRNA; the 5S rRNA and some of its associated proteins might help stabilize positioning of ribosome-bound tRNAs. The polypeptide is Large ribosomal subunit protein uL5 (Sodalis glossinidius (strain morsitans)).